The following is a 234-amino-acid chain: Staphylococcal superantigen-like 5 (234 aa).

The signal sequence occupies residues 1-30; the sequence is MKMTAIAKASLALGILATGTITSLHQTVNA.

The protein belongs to the staphylococcal/streptococcal toxin family. Interacts with host SELPLG; this interaction prevents SELPLG-mediated neutrophil rolling. Interacts with host MMP9 (via sialic acid-containing O-glycans); this interaction inhibits MMP9 activity. Interacts with host GP1BA and GP6; these interactions play an important role in platelet binding and activation.

Its function is as follows. Secreted protein that plays a role in the inhibition of host innate immune system. Modulates the interaction between host SELPLG and P-selectin thereby preventing initial rolling of neutrophils toward the site of infection. Interferes with leukocyte trafficking by inhibiting host metalloproteinase-9/MMP9 activity. Also associates with two different platelet surface receptors GP1A and GP6 leading to platelet activation and aggregation. This is Staphylococcal superantigen-like 5 from Staphylococcus aureus (strain NCTC 8325 / PS 47).